The following is a 717-amino-acid chain: DNA ligase (717 aa).

NAD(+)-binding positions include Asp44 to Asp48, Ser93 to Leu94, and Glu127. Lys129 acts as the N6-AMP-lysine intermediate in catalysis. Positions 150, 186, 302, and 326 each coordinate NAD(+). The Zn(2+) site is built by Cys431, Cys434, Cys455, and Cys461. A BRCT domain is found at Thr639 to Gly717.

It belongs to the NAD-dependent DNA ligase family. LigA subfamily. The cofactor is Mg(2+). It depends on Mn(2+) as a cofactor.

The catalysed reaction is NAD(+) + (deoxyribonucleotide)n-3'-hydroxyl + 5'-phospho-(deoxyribonucleotide)m = (deoxyribonucleotide)n+m + AMP + beta-nicotinamide D-nucleotide.. DNA ligase that catalyzes the formation of phosphodiester linkages between 5'-phosphoryl and 3'-hydroxyl groups in double-stranded DNA using NAD as a coenzyme and as the energy source for the reaction. It is essential for DNA replication and repair of damaged DNA. The chain is DNA ligase from Rhizobium rhizogenes (strain K84 / ATCC BAA-868) (Agrobacterium radiobacter).